We begin with the raw amino-acid sequence, 488 residues long: Protein nucleotidyltransferase YdiU (488 aa).

ATP contacts are provided by G90, G92, R93, K113, D125, G126, R176, and R183. The active-site Proton acceptor is the D252. Residues N253 and D262 each coordinate Mg(2+). D262 contributes to the ATP binding site.

It belongs to the SELO family. Mg(2+) is required as a cofactor. The cofactor is Mn(2+).

The enzyme catalyses L-seryl-[protein] + ATP = 3-O-(5'-adenylyl)-L-seryl-[protein] + diphosphate. The catalysed reaction is L-threonyl-[protein] + ATP = 3-O-(5'-adenylyl)-L-threonyl-[protein] + diphosphate. It carries out the reaction L-tyrosyl-[protein] + ATP = O-(5'-adenylyl)-L-tyrosyl-[protein] + diphosphate. It catalyses the reaction L-histidyl-[protein] + UTP = N(tele)-(5'-uridylyl)-L-histidyl-[protein] + diphosphate. The enzyme catalyses L-seryl-[protein] + UTP = O-(5'-uridylyl)-L-seryl-[protein] + diphosphate. The catalysed reaction is L-tyrosyl-[protein] + UTP = O-(5'-uridylyl)-L-tyrosyl-[protein] + diphosphate. In terms of biological role, nucleotidyltransferase involved in the post-translational modification of proteins. It can catalyze the addition of adenosine monophosphate (AMP) or uridine monophosphate (UMP) to a protein, resulting in modifications known as AMPylation and UMPylation. The protein is Protein nucleotidyltransferase YdiU of Thiobacillus denitrificans (strain ATCC 25259 / T1).